The following is a 121-amino-acid chain: Large ribosomal subunit protein bL12 (121 aa).

Belongs to the bacterial ribosomal protein bL12 family. Homodimer. Part of the ribosomal stalk of the 50S ribosomal subunit. Forms a multimeric L10(L12)X complex, where L10 forms an elongated spine to which 2 to 4 L12 dimers bind in a sequential fashion. Binds GTP-bound translation factors.

Forms part of the ribosomal stalk which helps the ribosome interact with GTP-bound translation factors. Is thus essential for accurate translation. The sequence is that of Large ribosomal subunit protein bL12 from Aliivibrio salmonicida (strain LFI1238) (Vibrio salmonicida (strain LFI1238)).